The chain runs to 417 residues: NADH-quinone oxidoreductase subunit D (417 aa).

Belongs to the complex I 49 kDa subunit family. In terms of assembly, NDH-1 is composed of 14 different subunits. Subunits NuoB, C, D, E, F, and G constitute the peripheral sector of the complex.

The protein resides in the cell inner membrane. The catalysed reaction is a quinone + NADH + 5 H(+)(in) = a quinol + NAD(+) + 4 H(+)(out). NDH-1 shuttles electrons from NADH, via FMN and iron-sulfur (Fe-S) centers, to quinones in the respiratory chain. The immediate electron acceptor for the enzyme in this species is believed to be ubiquinone. Couples the redox reaction to proton translocation (for every two electrons transferred, four hydrogen ions are translocated across the cytoplasmic membrane), and thus conserves the redox energy in a proton gradient. This chain is NADH-quinone oxidoreductase subunit D, found in Burkholderia ambifaria (strain ATCC BAA-244 / DSM 16087 / CCUG 44356 / LMG 19182 / AMMD) (Burkholderia cepacia (strain AMMD)).